Here is a 472-residue protein sequence, read N- to C-terminus: Putative diacyglycerol O-acyltransferase MT3172 (472 aa).

The active-site Proton acceptor is H139. The tract at residues 217 to 238 (DRRVPPTFDRSAPPGPFQRGLS) is disordered.

Belongs to the long-chain O-acyltransferase family.

The catalysed reaction is an acyl-CoA + a 1,2-diacyl-sn-glycerol = a triacyl-sn-glycerol + CoA. The protein operates within glycerolipid metabolism; triacylglycerol biosynthesis. In Mycobacterium tuberculosis (strain CDC 1551 / Oshkosh), this protein is Putative diacyglycerol O-acyltransferase MT3172.